We begin with the raw amino-acid sequence, 438 residues long: 3-phosphoshikimate 1-carboxyvinyltransferase (438 aa).

3-phosphoshikimate contacts are provided by lysine 26, serine 27, and arginine 31. Residue lysine 26 coordinates phosphoenolpyruvate. The phosphoenolpyruvate site is built by glycine 99 and arginine 127. Serine 172, glutamine 174, aspartate 320, and lysine 347 together coordinate 3-phosphoshikimate. Glutamine 174 serves as a coordination point for phosphoenolpyruvate. Catalysis depends on aspartate 320, which acts as the Proton acceptor. Residues arginine 351 and arginine 392 each coordinate phosphoenolpyruvate.

It belongs to the EPSP synthase family. As to quaternary structure, monomer.

Its subcellular location is the cytoplasm. It catalyses the reaction 3-phosphoshikimate + phosphoenolpyruvate = 5-O-(1-carboxyvinyl)-3-phosphoshikimate + phosphate. The protein operates within metabolic intermediate biosynthesis; chorismate biosynthesis; chorismate from D-erythrose 4-phosphate and phosphoenolpyruvate: step 6/7. Its function is as follows. Catalyzes the transfer of the enolpyruvyl moiety of phosphoenolpyruvate (PEP) to the 5-hydroxyl of shikimate-3-phosphate (S3P) to produce enolpyruvyl shikimate-3-phosphate and inorganic phosphate. This Xanthomonas campestris pv. campestris (strain 8004) protein is 3-phosphoshikimate 1-carboxyvinyltransferase.